Here is a 747-residue protein sequence, read N- to C-terminus: Ubiquitin carboxyl-terminal hydrolase 13 (747 aa).

The USP domain occupies 140–668; that stretch reads FGYENFGNTC…TAYVLFYKAM (529 aa). The active-site Nucleophile is cysteine 149. Disordered stretches follow at residues 172-305 and 318-367; these read PKKS…RPPD and YENP…RKKS. Over residues 174–183 the composition is skewed to basic and acidic residues; that stretch reads KSRESDQPRK. Phosphoserine is present on serine 198. The span at 225–235 shows a compositional bias: polar residues; the sequence is PVNSVNSNTAG. Residues 251 to 260 show a composition bias toward basic and acidic residues; the sequence is HVQDNNKKEG. Polar residues predominate over residues 319-343; that stretch reads ENPSRGSSNSNNLDLKGESNSSLST. Histidine 619 functions as the Proton acceptor in the catalytic mechanism.

Belongs to the peptidase C19 family.

The enzyme catalyses Thiol-dependent hydrolysis of ester, thioester, amide, peptide and isopeptide bonds formed by the C-terminal Gly of ubiquitin (a 76-residue protein attached to proteins as an intracellular targeting signal).. This chain is Ubiquitin carboxyl-terminal hydrolase 13 (UBP13), found in Saccharomyces cerevisiae (strain ATCC 204508 / S288c) (Baker's yeast).